Reading from the N-terminus, the 132-residue chain is Vacuolar protein sorting-associated protein 55 homolog (132 aa).

4 helical membrane-spanning segments follow: residues 7–27 (VAAL…GCAL), 32–52 (TWTP…LLIA), 68–88 (LALF…IVLA), and 98–118 (CFLV…YFYL).

The protein belongs to the OB-RGRP/VPS55 family.

The protein localises to the endosome membrane. Functionally, involved in endosomal protein transport. The sequence is that of Vacuolar protein sorting-associated protein 55 homolog from Caenorhabditis elegans.